A 359-amino-acid chain; its full sequence is Peptide chain release factor 1 (359 aa).

Position 235 is an N5-methylglutamine (Q235).

The protein belongs to the prokaryotic/mitochondrial release factor family. Post-translationally, methylated by PrmC. Methylation increases the termination efficiency of RF1.

Its subcellular location is the cytoplasm. In terms of biological role, peptide chain release factor 1 directs the termination of translation in response to the peptide chain termination codons UAG and UAA. The protein is Peptide chain release factor 1 of Polynucleobacter necessarius subsp. necessarius (strain STIR1).